Consider the following 220-residue polypeptide: ATP-dependent dethiobiotin synthetase BioD (220 aa).

13 to 18 (EVGKTV) contacts ATP. Thr17 provides a ligand contact to Mg(2+). The active site involves Lys38. A substrate-binding site is contributed by Ser42. Residues Asp55, 116-119 (EGAG), 176-177 (NR), and Asn212 contribute to the ATP site. Asp55 and Glu116 together coordinate Mg(2+).

This sequence belongs to the dethiobiotin synthetase family. In terms of assembly, homodimer. It depends on Mg(2+) as a cofactor.

Its subcellular location is the cytoplasm. The catalysed reaction is (7R,8S)-7,8-diammoniononanoate + CO2 + ATP = (4R,5S)-dethiobiotin + ADP + phosphate + 3 H(+). It functions in the pathway cofactor biosynthesis; biotin biosynthesis; biotin from 7,8-diaminononanoate: step 1/2. Functionally, catalyzes a mechanistically unusual reaction, the ATP-dependent insertion of CO2 between the N7 and N8 nitrogen atoms of 7,8-diaminopelargonic acid (DAPA, also called 7,8-diammoniononanoate) to form a ureido ring. In Photobacterium profundum (strain SS9), this protein is ATP-dependent dethiobiotin synthetase BioD.